The following is a 157-amino-acid chain: Protein-export protein SecB (157 aa).

This sequence belongs to the SecB family. In terms of assembly, homotetramer, a dimer of dimers. One homotetramer interacts with 1 SecA dimer.

It is found in the cytoplasm. One of the proteins required for the normal export of preproteins out of the cell cytoplasm. It is a molecular chaperone that binds to a subset of precursor proteins, maintaining them in a translocation-competent state. It also specifically binds to its receptor SecA. This is Protein-export protein SecB from Magnetococcus marinus (strain ATCC BAA-1437 / JCM 17883 / MC-1).